A 361-amino-acid polypeptide reads, in one-letter code: uncharacterized protein (361 aa).

41 to 48 contacts ATP; the sequence is GPLNSGKT.

The protein belongs to the archaeal ATPase family.

This is an uncharacterized protein from Methanocaldococcus jannaschii (strain ATCC 43067 / DSM 2661 / JAL-1 / JCM 10045 / NBRC 100440) (Methanococcus jannaschii).